A 260-amino-acid chain; its full sequence is Ribosomal RNA small subunit methyltransferase J (260 aa).

S-adenosyl-L-methionine contacts are provided by residues 108-109, 124-125, and aspartate 178; these read RD and ER.

The protein belongs to the methyltransferase superfamily. RsmJ family.

Its subcellular location is the cytoplasm. The catalysed reaction is guanosine(1516) in 16S rRNA + S-adenosyl-L-methionine = N(2)-methylguanosine(1516) in 16S rRNA + S-adenosyl-L-homocysteine + H(+). Its function is as follows. Specifically methylates the guanosine in position 1516 of 16S rRNA. The protein is Ribosomal RNA small subunit methyltransferase J of Ectopseudomonas mendocina (strain ymp) (Pseudomonas mendocina).